We begin with the raw amino-acid sequence, 931 residues long: Bifunctional uridylyltransferase/uridylyl-removing enzyme (931 aa).

The tract at residues 1–383 (MDSVATDSKA…TTGSTWRRVP (383 aa)) is uridylyltransferase. The interval 384-739 (ESDDFIVDNN…VGFDPARGVT (356 aa)) is uridylyl-removing. The HD domain maps to 499 to 622 (VDEHLIRCIG…VQSVEQMKLL (124 aa)). 2 ACT domains span residues 740-822 (ELTI…AVAR) and 851-931 (VIEV…QPAA).

It belongs to the GlnD family. The cofactor is Mg(2+).

The enzyme catalyses [protein-PII]-L-tyrosine + UTP = [protein-PII]-uridylyl-L-tyrosine + diphosphate. It catalyses the reaction [protein-PII]-uridylyl-L-tyrosine + H2O = [protein-PII]-L-tyrosine + UMP + H(+). Its activity is regulated as follows. Uridylyltransferase (UTase) activity is inhibited by glutamine, while glutamine activates uridylyl-removing (UR) activity. In terms of biological role, modifies, by uridylylation and deuridylylation, the PII regulatory proteins (GlnB and homologs), in response to the nitrogen status of the cell that GlnD senses through the glutamine level. Under low glutamine levels, catalyzes the conversion of the PII proteins and UTP to PII-UMP and PPi, while under higher glutamine levels, GlnD hydrolyzes PII-UMP to PII and UMP (deuridylylation). Thus, controls uridylylation state and activity of the PII proteins, and plays an important role in the regulation of nitrogen fixation and metabolism. This is Bifunctional uridylyltransferase/uridylyl-removing enzyme from Bradyrhizobium sp. (strain ORS 278).